The sequence spans 191 residues: Protein GrpE (191 aa).

Composition is skewed to basic and acidic residues over residues 1–19 (MKDEHNQEHDHLSPKEPES) and 29–45 (QQGEEKQEASEKEGEIK). A disordered region spans residues 1 to 45 (MKDEHNQEHDHLSPKEPESYQKAYACKEQQGEEKQEASEKEGEIK).

Belongs to the GrpE family. In terms of assembly, homodimer.

The protein resides in the cytoplasm. Its function is as follows. Participates actively in the response to hyperosmotic and heat shock by preventing the aggregation of stress-denatured proteins, in association with DnaK and GrpE. It is the nucleotide exchange factor for DnaK and may function as a thermosensor. Unfolded proteins bind initially to DnaJ; upon interaction with the DnaJ-bound protein, DnaK hydrolyzes its bound ATP, resulting in the formation of a stable complex. GrpE releases ADP from DnaK; ATP binding to DnaK triggers the release of the substrate protein, thus completing the reaction cycle. Several rounds of ATP-dependent interactions between DnaJ, DnaK and GrpE are required for fully efficient folding. The sequence is that of Protein GrpE from Helicobacter pylori (strain J99 / ATCC 700824) (Campylobacter pylori J99).